We begin with the raw amino-acid sequence, 348 residues long: Dihydroorotase (348 aa).

Zn(2+)-binding residues include histidine 17 and histidine 19. Substrate contacts are provided by residues 19 to 21 (HLR) and asparagine 45. Zn(2+) is bound by residues lysine 103, histidine 140, and histidine 178. Lysine 103 carries the N6-carboxylysine modification. A substrate-binding site is contributed by histidine 140. Residue leucine 223 coordinates substrate. Aspartate 251 serves as a coordination point for Zn(2+). The active site involves aspartate 251. Residues histidine 255 and alanine 267 each contribute to the substrate site.

This sequence belongs to the metallo-dependent hydrolases superfamily. DHOase family. Class II DHOase subfamily. In terms of assembly, homodimer. Zn(2+) is required as a cofactor.

It carries out the reaction (S)-dihydroorotate + H2O = N-carbamoyl-L-aspartate + H(+). Its pathway is pyrimidine metabolism; UMP biosynthesis via de novo pathway; (S)-dihydroorotate from bicarbonate: step 3/3. Functionally, catalyzes the reversible cyclization of carbamoyl aspartate to dihydroorotate. This Escherichia coli (strain SMS-3-5 / SECEC) protein is Dihydroorotase.